The chain runs to 384 residues: S-adenosylmethionine synthase (384 aa).

An ATP-binding site is contributed by His15. A Mg(2+)-binding site is contributed by Asp17. Glu43 contacts K(+). L-methionine-binding residues include Glu56 and Gln99. A flexible loop region spans residues 99–109; it reads QSPDINQGVDR. ATP contacts are provided by residues 164–166, 231–232, Asp240, 246–247, Ala263, and Lys267; these read DAK, RF, and RK. Asp240 contributes to the L-methionine binding site. An L-methionine-binding site is contributed by Lys271.

Belongs to the AdoMet synthase family. As to quaternary structure, homotetramer; dimer of dimers. Mg(2+) is required as a cofactor. K(+) serves as cofactor.

It is found in the cytoplasm. The enzyme catalyses L-methionine + ATP + H2O = S-adenosyl-L-methionine + phosphate + diphosphate. Its pathway is amino-acid biosynthesis; S-adenosyl-L-methionine biosynthesis; S-adenosyl-L-methionine from L-methionine: step 1/1. In terms of biological role, catalyzes the formation of S-adenosylmethionine (AdoMet) from methionine and ATP. The overall synthetic reaction is composed of two sequential steps, AdoMet formation and the subsequent tripolyphosphate hydrolysis which occurs prior to release of AdoMet from the enzyme. This Shewanella woodyi (strain ATCC 51908 / MS32) protein is S-adenosylmethionine synthase.